The following is a 197-amino-acid chain: MKVTKAELAHVAVKAEQYPKNQLPELALAGRSNVGKSSFINKMLNRKGLARTSGQPGKTQTLNFYEINERLYFVDVPGYGYAKVSKTERAAWGKMIETYLSEREELKAVLQLVDIRHRPSEDDQLMYNWMKHYGIPVILVATKADKIPKGKWQKQLTAIAKTLDKEASDPLLFFSSATGLGKDEAWRTILNHLKVTE.

The 174-residue stretch at 22–195 (QLPELALAGR…WRTILNHLKV (174 aa)) folds into the EngB-type G domain. GTP-binding positions include 30 to 37 (GRSNVGKS), 57 to 61 (GKTQT), 75 to 78 (DVPG), 142 to 145 (TKAD), and 174 to 176 (FSS). Mg(2+) contacts are provided by Ser-37 and Thr-59.

It belongs to the TRAFAC class TrmE-Era-EngA-EngB-Septin-like GTPase superfamily. EngB GTPase family. Requires Mg(2+) as cofactor.

Its function is as follows. Necessary for normal cell division and for the maintenance of normal septation. This is Probable GTP-binding protein EngB from Shouchella clausii (strain KSM-K16) (Alkalihalobacillus clausii).